Here is a 372-residue protein sequence, read N- to C-terminus: Probable basic-leucine zipper transcription factor G (372 aa).

Disordered stretches follow at residues 1–20 (MLSVWNLPVEQQPQQQQQQQ) and 176–234 (TTNN…EKFE). Composition is skewed to low complexity over residues 11-20 (QQPQQQQQQQ) and 176-215 (TTNNNNNNNNNNNNNNNNNNSNNNNSNNNNINNNNNKSNT). Residues 223-234 (IRNSNSTFEKFE) are compositionally biased toward polar residues. One can recognise a bZIP domain in the interval 277 to 340 (ELKRQKRLIK…LILKAEVGQL (64 aa)). Positions 279-301 (KRQKRLIKNRESAHLSRQRKRER) are basic motif. Residues 305 to 340 (LEHRVEELSSNSIDINKTLSSLENENLILKAEVGQL) are leucine-zipper.

This sequence belongs to the bZIP family.

It localises to the nucleus. In terms of biological role, probable transcriptional regulator. The chain is Probable basic-leucine zipper transcription factor G (bzpG) from Dictyostelium discoideum (Social amoeba).